Here is a 46-residue protein sequence, read N- to C-terminus: Esculentin-1 (46 aa).

A disulfide bond links cysteine 40 and cysteine 46.

This sequence belongs to the frog skin active peptide (FSAP) family. Brevinin subfamily. In terms of tissue distribution, expressed by the skin glands.

Its subcellular location is the secreted. Shows antibacterial activity against representative Gram-negative and Gram-positive bacterial species, and hemolytic activity. This chain is Esculentin-1, found in Pelophylax lessonae (Pool frog).